The sequence spans 140 residues: MSLEIPPEWKNFKYRGKSIDELLNMPMDEFIKLLPSRQRRSLKRGFTDAQRHLLEKVRKYRREGKFNKTIKTHVRNLVILPELIGLKMAVYNGKEFVEFTVTPEMIGHYLGEYSITTKKVEHGEPGLKATRSSLFLAMKG.

This sequence belongs to the universal ribosomal protein uS19 family.

Functionally, protein S19 forms a complex with S13 that binds strongly to the 16S ribosomal RNA. The polypeptide is Small ribosomal subunit protein uS19 (rps19) (Saccharolobus solfataricus (strain ATCC 35092 / DSM 1617 / JCM 11322 / P2) (Sulfolobus solfataricus)).